The chain runs to 316 residues: MPREDRATWKSNYFMKIIQLLDDYPKCFVVGADNVGSKQMQQIRMSLRGKAVVLMGKNTMMRKAIRGHLENNPALEKLLPHIRGNVGFVFTKEDLTEIRDMLLANKVPAAARAGAIAPCDVTVPAQNTGLGPEKTSFFQALGITTKISRGTIEILSDVQLIKTGDKVGASEATLLNMLNISPFSFGLVIQQVFDNGSIYNPEVLDITEETLHKRFLEGVRNVASVCLQIGYPTIASVPHSIVNGYKRVLAVAVETDYTFPLAEKVKAFLADPSAFVAAAPVVVETAAPAAAAAPAKEAPKEESEESDEDMGFGLFD.

The interval 289-316 (AAAAAPAKEAPKEESEESDEDMGFGLFD) is disordered.

It belongs to the universal ribosomal protein uL10 family. P0 forms a pentameric complex by interaction with dimers of P1 and P2. Phosphorylated.

The protein resides in the nucleus. The protein localises to the cytoplasm. In terms of biological role, ribosomal protein P0 is the functional equivalent of E.coli protein L10. The sequence is that of Large ribosomal subunit protein uL10 (RPLP0) from Gallus gallus (Chicken).